A 299-amino-acid chain; its full sequence is Probable lipid kinase YegS (299 aa).

Residues Ala2 to Thr133 form the DAGKc domain. ATP is bound by residues Thr40, Gly66 to Glu72, and Thr95. 3 residues coordinate Mg(2+): Leu215, Asp218, and Leu220. The active-site Proton acceptor is the Glu271.

This sequence belongs to the diacylglycerol/lipid kinase family. YegS lipid kinase subfamily. The cofactor is Mg(2+). Requires Ca(2+) as cofactor.

Its subcellular location is the cytoplasm. Probably phosphorylates lipids; the in vivo substrate is unknown. This is Probable lipid kinase YegS from Salmonella arizonae (strain ATCC BAA-731 / CDC346-86 / RSK2980).